The primary structure comprises 283 residues: Protein canopy homolog 3 (283 aa).

Positions Met-1–Ala-35 are cleaved as a signal peptide. Residues Ser-55–Thr-276 form the Saposin B-type domain. Asn-161 carries N-linked (GlcNAc...) asparagine glycosylation. Residues Asn-161–Asp-187 are a coiled coil. The tract at residues Lys-223–Leu-283 is disordered.

It belongs to the canopy family. Interacts with HSP90B1; this interaction is disrupted in the presence of ATP. Interacts with TLR1, TLR2, TLR4 and TLR9.

The protein resides in the endoplasmic reticulum. Functionally, toll-like receptor (TLR)-specific co-chaperone for HSP90B1. Required for proper TLR folding, except that of TLR3, and hence controls TLR exit from the endoplasmic reticulum. Consequently, required for both innate and adaptive immune responses. This chain is Protein canopy homolog 3 (CNPY3), found in Sus scrofa (Pig).